We begin with the raw amino-acid sequence, 468 residues long: 3-isopropylmalate dehydratase large subunit (468 aa).

Residues C347, C408, and C411 each coordinate [4Fe-4S] cluster.

It belongs to the aconitase/IPM isomerase family. LeuC type 1 subfamily. Heterodimer of LeuC and LeuD. [4Fe-4S] cluster serves as cofactor.

It carries out the reaction (2R,3S)-3-isopropylmalate = (2S)-2-isopropylmalate. The protein operates within amino-acid biosynthesis; L-leucine biosynthesis; L-leucine from 3-methyl-2-oxobutanoate: step 2/4. Its function is as follows. Catalyzes the isomerization between 2-isopropylmalate and 3-isopropylmalate, via the formation of 2-isopropylmaleate. This chain is 3-isopropylmalate dehydratase large subunit, found in Janthinobacterium sp. (strain Marseille) (Minibacterium massiliensis).